The chain runs to 383 residues: L-lactate dehydrogenase (383 aa).

Positions 1–380 (MIVSSTTDFR…NETILAERVP (380 aa)) constitute an FMN hydroxy acid dehydrogenase domain. Y24 provides a ligand contact to substrate. FMN-binding residues include S106 and Q127. Y129 is a substrate binding site. T155 is a binding site for FMN. Residue R164 coordinates substrate. An FMN-binding site is contributed by K251. The Proton acceptor role is filled by H275. R278 lines the substrate pocket. 306 to 330 (DGGVRSGLDVVRMLALGARGVLIGR) contacts FMN.

The protein belongs to the FMN-dependent alpha-hydroxy acid dehydrogenase family. FMN serves as cofactor.

The protein localises to the cell inner membrane. It catalyses the reaction (S)-lactate + A = pyruvate + AH2. Functionally, catalyzes the conversion of L-lactate to pyruvate. Is coupled to the respiratory chain. In Caulobacter vibrioides (strain ATCC 19089 / CIP 103742 / CB 15) (Caulobacter crescentus), this protein is L-lactate dehydrogenase.